The following is a 325-amino-acid chain: Histone-lysine N-methyltransferase ATXR4 (325 aa).

The first 30 residues, 1–30 (MSRLALNRYSRCFSRLKTLTTPLFFSSSAA), serve as a signal peptide directing secretion. The region spanning 42-295 (PPIRVGLTES…EGEELRICYI (254 aa)) is the SET domain.

This sequence belongs to the class V-like SAM-binding methyltransferase superfamily. Histone-lysine methyltransferase family. TRX/MLL subfamily.

It is found in the nucleus. The catalysed reaction is L-lysyl-[histone] + S-adenosyl-L-methionine = N(6)-methyl-L-lysyl-[histone] + S-adenosyl-L-homocysteine + H(+). Histone methyltransferase. This Arabidopsis thaliana (Mouse-ear cress) protein is Histone-lysine N-methyltransferase ATXR4 (ATXR4).